A 158-amino-acid chain; its full sequence is Regulator of sigma D (158 aa).

Belongs to the Rsd/AlgQ family. Interacts with RpoD.

The protein resides in the cytoplasm. Binds RpoD and negatively regulates RpoD-mediated transcription activation by preventing the interaction between the primary sigma factor RpoD with the catalytic core of the RNA polymerase and with promoter DNA. May be involved in replacement of the RNA polymerase sigma subunit from RpoD to RpoS during the transition from exponential growth to the stationary phase. This chain is Regulator of sigma D, found in Escherichia coli (strain SMS-3-5 / SECEC).